Consider the following 241-residue polypeptide: ATP synthase subunit a (241 aa).

A run of 8 helical transmembrane segments spans residues 29-49 (NSSF…LFGI), 54-74 (VIPG…ISII), 86-106 (IPLI…GVLP), 114-134 (HVIV…IVGF), 153-173 (WLAP…PVSL), 177-197 (LAAN…FIVN), 200-220 (IFFT…EVFV), and 221-241 (AILQ…DAVK).

It belongs to the ATPase A chain family. As to quaternary structure, F-type ATPases have 2 components, CF(1) - the catalytic core - and CF(0) - the membrane proton channel. CF(1) has five subunits: alpha(3), beta(3), gamma(1), delta(1), epsilon(1). CF(0) has three main subunits: a(1), b(2) and c(9-12). The alpha and beta chains form an alternating ring which encloses part of the gamma chain. CF(1) is attached to CF(0) by a central stalk formed by the gamma and epsilon chains, while a peripheral stalk is formed by the delta and b chains.

It is found in the cell membrane. In terms of biological role, key component of the proton channel; it plays a direct role in the translocation of protons across the membrane. The sequence is that of ATP synthase subunit a from Wolbachia pipientis wMel.